The primary structure comprises 55 residues: Large ribosomal subunit protein bL33A (55 aa).

Belongs to the bacterial ribosomal protein bL33 family.

This chain is Large ribosomal subunit protein bL33A, found in Mycolicibacterium vanbaalenii (strain DSM 7251 / JCM 13017 / BCRC 16820 / KCTC 9966 / NRRL B-24157 / PYR-1) (Mycobacterium vanbaalenii).